The primary structure comprises 1341 residues: DNA-directed RNA polymerase subunit beta (1341 aa).

Belongs to the RNA polymerase beta chain family. As to quaternary structure, the RNAP catalytic core consists of 2 alpha, 1 beta, 1 beta' and 1 omega subunit. When a sigma factor is associated with the core the holoenzyme is formed, which can initiate transcription.

The catalysed reaction is RNA(n) + a ribonucleoside 5'-triphosphate = RNA(n+1) + diphosphate. In terms of biological role, DNA-dependent RNA polymerase catalyzes the transcription of DNA into RNA using the four ribonucleoside triphosphates as substrates. This chain is DNA-directed RNA polymerase subunit beta, found in Blochmanniella pennsylvanica (strain BPEN).